The primary structure comprises 349 residues: Anthranilate phosphoribosyltransferase (349 aa).

5-phospho-alpha-D-ribose 1-diphosphate-binding positions include Gly-94, 97-98 (GD), Thr-102, 104-107 (NIST), 122-130 (KHGNRSVSS), and Ser-134. Position 94 (Gly-94) interacts with anthranilate. Ser-106 is a Mg(2+) binding site. An anthranilate-binding site is contributed by Asn-125. Arg-180 lines the anthranilate pocket. 2 residues coordinate Mg(2+): Asp-239 and Glu-240.

This sequence belongs to the anthranilate phosphoribosyltransferase family. Homodimer. Requires Mg(2+) as cofactor.

The enzyme catalyses N-(5-phospho-beta-D-ribosyl)anthranilate + diphosphate = 5-phospho-alpha-D-ribose 1-diphosphate + anthranilate. It functions in the pathway amino-acid biosynthesis; L-tryptophan biosynthesis; L-tryptophan from chorismate: step 2/5. Its function is as follows. Catalyzes the transfer of the phosphoribosyl group of 5-phosphorylribose-1-pyrophosphate (PRPP) to anthranilate to yield N-(5'-phosphoribosyl)-anthranilate (PRA). This chain is Anthranilate phosphoribosyltransferase, found in Trichlorobacter lovleyi (strain ATCC BAA-1151 / DSM 17278 / SZ) (Geobacter lovleyi).